The primary structure comprises 397 residues: Acetate kinase (397 aa).

N7 is a binding site for Mg(2+). Position 14 (K14) interacts with ATP. R88 lines the substrate pocket. The active-site Proton donor/acceptor is D145. ATP contacts are provided by residues 205–209 (HLGNG), 279–281 (DMR), and 326–330 (GIGEN). Residue E380 coordinates Mg(2+).

The protein belongs to the acetokinase family. As to quaternary structure, homodimer. Mg(2+) is required as a cofactor. It depends on Mn(2+) as a cofactor.

The protein localises to the cytoplasm. The catalysed reaction is acetate + ATP = acetyl phosphate + ADP. Its pathway is metabolic intermediate biosynthesis; acetyl-CoA biosynthesis; acetyl-CoA from acetate: step 1/2. Catalyzes the formation of acetyl phosphate from acetate and ATP. Can also catalyze the reverse reaction. The chain is Acetate kinase from Campylobacter concisus (strain 13826).